The following is a 201-amino-acid chain: Histidinol dehydrogenase (201 aa).

The protein belongs to the histidinol dehydrogenase family. As to quaternary structure, homodimer. Zn(2+) serves as cofactor.

The catalysed reaction is L-histidinol + 2 NAD(+) + H2O = L-histidine + 2 NADH + 3 H(+). The protein operates within amino-acid biosynthesis; L-histidine biosynthesis; L-histidine from 5-phospho-alpha-D-ribose 1-diphosphate: step 9/9. Catalyzes the sequential NAD-dependent oxidations of L-histidinol to L-histidinaldehyde and then to L-histidine. The polypeptide is Histidinol dehydrogenase (hisD) (Buchnera aphidicola subsp. Diuraphis noxia).